We begin with the raw amino-acid sequence, 297 residues long: Protein transport protein SEC13 (297 aa).

WD repeat units follow at residues 7–46, 51–92, 97–138, 143–195, 202–244, and 252–291; these read AHNELIHDAVLDYYGKRLATCSSDKTIKIFEVEGETHKLI, GHEG…WSQI, VHSA…TTSP, AHAI…QTYV, GHSD…GPWK, and KFPDVLWRASWSLSGNVLALSGGDNKVTLWKENLEGKWEP.

The protein belongs to the WD repeat SEC13 family. As to quaternary structure, the basic repeat unit of a COPII coated vesicle is composed of 5 proteins: the small GTPase SAR1, the heterodimeric SEC23-SEC24 complex, and the heterotetrameric SEC13-SEC31 complex. This repeat unit polymerizes to induce membrane deformation into a transport vesicle. Component of the nuclear pore complex (NPC). NPC constitutes the exclusive means of nucleocytoplasmic transport. NPCs allow the passive diffusion of ions and small molecules and the active, nuclear transport receptor-mediated bidirectional transport of macromolecules such as proteins, RNAs, ribonucleoparticles (RNPs), and ribosomal subunits across the nuclear envelope. Due to its 8-fold rotational symmetry, all subunits are present with 8 copies or multiples thereof. SEC13 is part of the heptameric 0.5 MDa autoassembling NUP84 NPC subcomplex (NUP84, NUP85, NUP120, NUP133, NUP145C, SEC13 and SEH1). Component of the SEA complex composed of at least IML1/SEA1, RTC1/SEA2, MTC5/SEA3, NPR2, NPR3, SEA4, SEC13 and SEH1.

The protein resides in the cytoplasmic vesicle. Its subcellular location is the COPII-coated vesicle membrane. It is found in the endoplasmic reticulum membrane. It localises to the nucleus. The protein localises to the nuclear pore complex. The protein resides in the vacuole membrane. Functionally, functions as a component of the nuclear pore complex (NPC) and the COPII coat. It is one of 5 proteins constituting the COPII coat, which is involved in anterograde (ER to Golgi) double-membrane transport vesicle formation. First the small GTPase SAR1, activated by and binding to the integral ER membrane protein SEC12, exchanges GDP for GTP and recruits the heterodimer SEC23/24, which in turn recruits the heterotetramer SEC13-SEC31. The polymerization of COPII coat complexes then causes physically the deformation (budding) of the membrane, leading to the creation of a transport vesicle. The COPII complex is dissociated upon SAR1-GTP hydrolysis to SAR1-GDP. SEC23 functions as the SAR1 GTPase activating protein, whose activity is stimulated in the presence of SEC13/31. SEC13 is directly or indirectly required for normal ER membrane and nuclear envelope morphology. It also functions as a component of the nuclear pore complex (NPC). NPC components, collectively referred to as nucleoporins (NUPs), can play the role of both NPC structural components and of docking or interaction partners for transiently associated nuclear transport factors. SEC13 is required for efficient mRNA export from the nucleus to the cytoplasm and for correct nuclear pore biogenesis and distribution. Component of the SEA complex which coats the vacuolar membrane and is involved in intracellular trafficking, autophagy, response to nitrogen starvation, and amino acid biogenesis. The chain is Protein transport protein SEC13 (SEC13) from Saccharomyces cerevisiae (strain ATCC 204508 / S288c) (Baker's yeast).